Here is a 486-residue protein sequence, read N- to C-terminus: UDP-GalNAc:beta-1,3-N-acetylgalactosaminyltransferase 2 (486 aa).

Over 1 to 10 (MRHLLFLCPC) the chain is Cytoplasmic. The helical; Signal-anchor for type II membrane protein transmembrane segment at 11 to 31 (VIGVAFHLWLFNFSGLFSWFL) threads the bilayer. Over 32 to 486 (VWSPHSYDIV…CGNPCACEDR (455 aa)) the chain is Lumenal. N-linked (GlcNAc...) asparagine glycans are attached at residues Asn103 and Asn160.

The protein belongs to the glycosyltransferase 31 family.

The protein localises to the golgi apparatus membrane. Its subcellular location is the endoplasmic reticulum. It catalyses the reaction 3-O-(N-acetyl-beta-D-glucosaminyl-(1-&gt;4)-alpha-D-mannosyl)-L-threonyl-[protein] + UDP-N-acetyl-alpha-D-galactosamine = 3-O-[beta-D-GalNAc-(1-&gt;3)-beta-D-GlcNAc-(1-&gt;4)-alpha-D-Man]-L-Thr-[protein] + UDP + H(+). It participates in protein modification; protein glycosylation. In terms of biological role, beta-1,3-N-acetylgalactosaminyltransferase that synthesizes a unique carbohydrate structure, GalNAc-beta-1-3GlcNAc, on N- and O-glycans. Has no galactose nor galactosaminyl transferase activity toward any acceptor substrate. Involved in alpha-dystroglycan (dag1) glycosylation. The polypeptide is UDP-GalNAc:beta-1,3-N-acetylgalactosaminyltransferase 2 (b3galnt2) (Xenopus laevis (African clawed frog)).